Reading from the N-terminus, the 635-residue chain is Threonine--tRNA ligase (635 aa).

The region spanning 1 to 61 (MIKITLKDGS…KEDAALELLT (61 aa)) is the TGS domain. Residues 242-532 (DHRKLGQELD…LTEHFAGAFP (291 aa)) form a catalytic region. 3 residues coordinate Zn(2+): C333, H384, and H509.

Belongs to the class-II aminoacyl-tRNA synthetase family. Homodimer. Zn(2+) serves as cofactor.

It localises to the cytoplasm. The enzyme catalyses tRNA(Thr) + L-threonine + ATP = L-threonyl-tRNA(Thr) + AMP + diphosphate + H(+). Catalyzes the attachment of threonine to tRNA(Thr) in a two-step reaction: L-threonine is first activated by ATP to form Thr-AMP and then transferred to the acceptor end of tRNA(Thr). Also edits incorrectly charged L-seryl-tRNA(Thr). The polypeptide is Threonine--tRNA ligase (Desulforamulus reducens (strain ATCC BAA-1160 / DSM 100696 / MI-1) (Desulfotomaculum reducens)).